The following is a 674-amino-acid chain: Putative kinase-like protein TMKL1 (674 aa).

An N-terminal signal peptide occupies residues 1–25; sequence MGMEALRFLHVIFFFVLILHCHCGT. The Extracellular segment spans residues 26 to 295; that stretch reads SLSGSSDVKL…PLKPCLGSSR (270 aa). Residues N57, N90, N95, and N110 are each glycosylated (N-linked (GlcNAc...) asparagine). LRR repeat units lie at residues 100–122, 124–146, 148–169, and 173–194; these read HLLSLQLPSANLTGSLPREIGEF, MLQSVFLNINSLSGSIPLELGYT, SLSDVDLSGNALAGVLPPSIWN, and KLVSFKIHGNNLSGVLPEPALP. N-linked (GlcNAc...) asparagine glycosylation is found at N183 and N195. 3 LRR repeats span residues 200-222, 224-244, and 247-269; these read NLQVLDLGGNKFSGEFPEFITRF, GVKSLDLSSNVFEGLVPEGLG, and ELESLNLSHNNFSGMLPDFGESK. N252 and N257 each carry an N-linked (GlcNAc...) asparagine glycan. The helical transmembrane segment at 296–323 threads the bilayer; that stretch reads LSPGAVAGLVIGLMSGAVVVASLLIGYL. Residues 324–674 are Cytoplasmic-facing; that stretch reads QNKKRKSSIE…ETRSDAETPF (351 aa). Positions 331 to 350 are disordered; sequence SIESEDDLEEGDEEDEIGEK. The span at 333-348 shows a compositional bias: acidic residues; it reads ESEDDLEEGDEEDEIG. S334 is subject to Phosphoserine. A Protein kinase domain is found at 373 to 674; that stretch reads NATGQVMEKT…ETRSDAETPF (302 aa). T375 bears the Phosphothreonine mark. S454 bears the Phosphoserine mark. A disordered region spans residues 649–674; it reads LEENRPRNRSALYSPTETRSDAETPF.

This sequence belongs to the protein kinase superfamily.

It is found in the membrane. Does not seem to have conserved a kinase activity. This Arabidopsis thaliana (Mouse-ear cress) protein is Putative kinase-like protein TMKL1 (TMKL1).